Consider the following 284-residue polypeptide: Nucleotide-binding protein Sden_0486 (284 aa).

Gly-8–Ser-15 serves as a coordination point for ATP. Residue Asp-56–Asn-59 coordinates GTP.

Belongs to the RapZ-like family.

Displays ATPase and GTPase activities. This is Nucleotide-binding protein Sden_0486 from Shewanella denitrificans (strain OS217 / ATCC BAA-1090 / DSM 15013).